We begin with the raw amino-acid sequence, 167 residues long: NAD(P)H-quinone oxidoreductase subunit I, chloroplastic (167 aa).

4Fe-4S ferredoxin-type domains lie at 55 to 84 (GRIH…VDWK) and 95 to 124 (LNYS…MTEE). Residues cysteine 64, cysteine 67, cysteine 70, cysteine 74, cysteine 104, cysteine 107, cysteine 110, and cysteine 114 each coordinate [4Fe-4S] cluster.

It belongs to the complex I 23 kDa subunit family. In terms of assembly, NDH is composed of at least 16 different subunits, 5 of which are encoded in the nucleus. Requires [4Fe-4S] cluster as cofactor.

It is found in the plastid. It localises to the chloroplast thylakoid membrane. It carries out the reaction a plastoquinone + NADH + (n+1) H(+)(in) = a plastoquinol + NAD(+) + n H(+)(out). The enzyme catalyses a plastoquinone + NADPH + (n+1) H(+)(in) = a plastoquinol + NADP(+) + n H(+)(out). Its function is as follows. NDH shuttles electrons from NAD(P)H:plastoquinone, via FMN and iron-sulfur (Fe-S) centers, to quinones in the photosynthetic chain and possibly in a chloroplast respiratory chain. The immediate electron acceptor for the enzyme in this species is believed to be plastoquinone. Couples the redox reaction to proton translocation, and thus conserves the redox energy in a proton gradient. The chain is NAD(P)H-quinone oxidoreductase subunit I, chloroplastic from Jasminum nudiflorum (Winter jasmine).